The sequence spans 266 residues: UPF0294 protein YafD (266 aa).

The protein belongs to the UPF0294 family.

Its subcellular location is the cytoplasm. This chain is UPF0294 protein YafD, found in Salmonella agona (strain SL483).